Reading from the N-terminus, the 247-residue chain is Probable transcriptional regulatory protein Glov_1245 (247 aa).

This sequence belongs to the TACO1 family.

It localises to the cytoplasm. The chain is Probable transcriptional regulatory protein Glov_1245 from Trichlorobacter lovleyi (strain ATCC BAA-1151 / DSM 17278 / SZ) (Geobacter lovleyi).